Reading from the N-terminus, the 499-residue chain is Endosomal/lysosomal proton channel TMEM175 (499 aa).

Residues 1-30 (MSRLQTEEQAVDSEGDSSLHRRNEEGTQSS) lie on the Cytoplasmic side of the membrane. The segment at 1 to 30 (MSRLQTEEQAVDSEGDSSLHRRNEEGTQSS) is disordered. The residue at position 6 (threonine 6) is a Phosphothreonine. A helical membrane pass occupies residues 31-53 (HRMLGFSDALLSIIATVMILPVT). Positions 32-38 (RMLGFSD) match the RxxxFSD motif 1 motif. The Lumenal portion of the chain corresponds to 54–74 (HTEISPEQQFDKSIQKLLATR). Residues 55 to 60 (TEISPE) are short helix H1-1. Positions 62–68 (QFDKSIQ) are short helix H2-1. The chain crosses the membrane as a helical span at residues 75–97 (IAVYLMTFLIVTVAWTAHTRLFQ). The Cytoplasmic segment spans residues 98-103 (VVGKID). A helical transmembrane segment spans residues 104 to 125 (DTLALLNLACMMTITLLPYTFS). Residues 126–135 (LMVTFPDVPL) lie on the Lumenal side of the membrane. The helical transmembrane segment at 136–157 (GIFLFCVCVIAIGSVQAMIVGY) threads the bilayer. Topologically, residues 158-181 (AFHFPHLLNPQIQCSTHRDLSRRH) are cytoplasmic. Residues 182–202 (ILHLVLRGPALCFVAAVFSLF) form a helical membrane-spanning segment. The Lumenal portion of the chain corresponds to 203–207 (FFPLS). A helical membrane pass occupies residues 208-227 (YLLMVTVIFLPHISKATTWC). At 228–254 (KDKLMGQRESPAHDMEPFSIDLHAPLS) the chain is on the cytoplasmic side. The helical transmembrane segment at 255–279 (KERVEAFSDGVYAIVATLLILDICE) threads the bilayer. A RxxxFSD motif 2 motif is present at residues 257 to 263 (RVEAFSD). Topologically, residues 280-306 (DNVPDPKDVQEKFSGSLVAALGAYGPQ) are lumenal. Residues 285–293 (PKDVQEKFS) form a short helix H1-2 region. The segment at 295 to 301 (SLVAALG) is short helix H2-2. Residues 307–329 (FLAYFGSFATVGLLWFAHHSLFL) form a helical membrane-spanning segment. Topologically, residues 330–335 (HVRKAT) are cytoplasmic. Residues 336–357 (QTMGLLNILSLAFVGGLPLAYQ) form a helical membrane-spanning segment. The Lumenal portion of the chain corresponds to 358 to 372 (QTSAFARQPHDELER). Residues 373–393 (VRVSCAIIFFASIFQFAIWTT) traverse the membrane as a helical segment. Residues 394 to 413 (ALLHQTETLQPAVQFGGQEH) are Cytoplasmic-facing. Residues 414 to 437 (AFMFAKLALYPCASLLAFAATCLL) traverse the membrane as a helical segment. Topologically, residues 438 to 439 (SR) are lumenal. The helical transmembrane segment at 440 to 466 (FSTAIFHLMQISVPFAFLLLRLLVRLA) threads the bilayer. Residues 467 to 499 (LAGLQVLRGLWPHHPQQDQSEPEAQSQLLPDPC) are Cytoplasmic-facing.

It belongs to the TMEM175 family. Homodimer. Interacts with AKT (AKT1, AKT2 or AKT3); leading to formation of the lysoK(GF) complex, which activates the channel. Interacts with LAMP1; inhibiting the proton channel activity of TMEM175. Interacts with LAMP2; inhibiting the proton channel activity of TMEM175.

It localises to the endosome membrane. The protein localises to the lysosome membrane. The enzyme catalyses H(+)(in) = H(+)(out). It catalyses the reaction K(+)(in) = K(+)(out). Active at low pH (under pH 4.6): proton channel activity is activated by luminal side protons. Polyunsaturated fatty acids, such as arachidonic acid, also activate the channel activity. Proton channel activity is directly inhibited by LAMP1 or LAMP2, facilitating lysosomal acidification. Channel activity is activated following interaction with AKT (AKT1, AKT2 or AKT3): interaction promotes activation from closed to an open state. Activation by AKT is independent of AKT serine/threonine-protein kinase activity. Functionally, proton-activated proton channel that catalyzes proton efflux from endosomes and lysosomes to maintain a steady-state pH. Activated at low pH (under pH 4.6) by luminal side protons: selectively mediates lysosomal proton release from lysosomes, eliciting a proton leak that balances V-ATPase activity to maintain pH homeostasis. Regulation of lumenal pH stability is required for autophagosome-lysosome fusion. Also acts as a potassium channel at higher pH, regulating potassium conductance in endosomes and lysosomes. Constitutes the pore-forming subunit of the lysoK(GF) complex, a complex activated by extracellular growth factors. The lysoK(GF) complex is composed of TMEM175 and AKT (AKT1, AKT2 or AKT3), a major target of growth factor receptors: in the complex, TMEM175 channel is opened by conformational changes by AKT, leading to its activation. The lysoK(GF) complex is required to protect neurons against stress-induced damage. In Mus musculus (Mouse), this protein is Endosomal/lysosomal proton channel TMEM175.